The sequence spans 428 residues: Nucleoside diphosphate phosphatase ENTPD5 (428 aa).

The first 24 residues, 1-24, serve as a signal peptide directing secretion; that stretch reads MATSWGTVFFMLVVSCVCSAVSHR. The Proton acceptor role is filled by Glu172. The N-linked (GlcNAc...) asparagine glycan is linked to Asn232. Disulfide bonds link Cys272–Cys303 and Cys363–Cys377. Asn368 carries an N-linked (GlcNAc...) asparagine glycan.

It belongs to the GDA1/CD39 NTPase family. In terms of assembly, monomer; active form. Homodimer; disulfide-linked. Homodimers are enzymatically inactive. The cofactor is Ca(2+). Mg(2+) is required as a cofactor. In terms of processing, N-glycosylated; high-mannose type. Glycosylation is not essential for enzymatic activity. In terms of tissue distribution, expressed in adult liver, kidney, prostate, testis and colon. Much weaker expression in other tissues.

The protein resides in the endoplasmic reticulum. It is found in the secreted. The catalysed reaction is a ribonucleoside 5'-diphosphate + H2O = a ribonucleoside 5'-phosphate + phosphate + H(+). It catalyses the reaction GDP + H2O = GMP + phosphate + H(+). The enzyme catalyses UDP + H2O = UMP + phosphate + H(+). It carries out the reaction IDP + H2O = IMP + phosphate + H(+). The catalysed reaction is CDP + H2O = CMP + phosphate + H(+). It catalyses the reaction ADP + H2O = AMP + phosphate + H(+). The protein operates within protein modification; protein glycosylation. Hydrolyzes nucleoside diphosphates with a preference for GDP, IDP and UDP compared to ADP and CDP. In the lumen of the endoplasmic reticulum, hydrolyzes UDP that acts as an end-product feedback inhibitor of the UDP-Glc:glycoprotein glucosyltransferases. UMP can be transported back by an UDP-sugar antiporter to the cytosol where it is consumed to regenerate UDP-glucose. Therefore, it positively regulates protein reglucosylation by clearing UDP from the ER lumen and by promoting the regeneration of UDP-glucose. Protein reglucosylation is essential to proper glycoprotein folding and quality control in the ER. This chain is Nucleoside diphosphate phosphatase ENTPD5, found in Homo sapiens (Human).